The chain runs to 353 residues: UPF0283 membrane protein YcjF (353 aa).

3 consecutive transmembrane segments (helical) span residues 70–90 (MVMG…VQWT), 100–120 (VALG…GSVV), and 213–233 (ESTL…FIAW).

It belongs to the UPF0283 family.

The protein localises to the cell inner membrane. The sequence is that of UPF0283 membrane protein YcjF from Escherichia coli O45:K1 (strain S88 / ExPEC).